The primary structure comprises 680 residues: DNA-directed RNA polymerase subunit beta' (680 aa).

4 residues coordinate Zn(2+): Cys-69, Cys-71, Cys-87, and Cys-90. Mg(2+)-binding residues include Asp-489, Asp-491, and Asp-493.

This sequence belongs to the RNA polymerase beta' chain family. RpoC1 subfamily. As to quaternary structure, in plastids the minimal PEP RNA polymerase catalytic core is composed of four subunits: alpha, beta, beta', and beta''. When a (nuclear-encoded) sigma factor is associated with the core the holoenzyme is formed, which can initiate transcription. Mg(2+) is required as a cofactor. The cofactor is Zn(2+).

It localises to the plastid. It is found in the chloroplast. It carries out the reaction RNA(n) + a ribonucleoside 5'-triphosphate = RNA(n+1) + diphosphate. Functionally, DNA-dependent RNA polymerase catalyzes the transcription of DNA into RNA using the four ribonucleoside triphosphates as substrates. The chain is DNA-directed RNA polymerase subunit beta' from Cucumis sativus (Cucumber).